The following is a 138-amino-acid chain: uncharacterized protein (138 aa).

This is an uncharacterized protein from Schizosaccharomyces pombe (strain 972 / ATCC 24843) (Fission yeast).